The sequence spans 507 residues: Peroxisomal catalase (507 aa).

Residues histidine 65 and asparagine 138 contribute to the active site. Tyrosine 348 is a binding site for heme. The short motif at 505 to 507 (SKI) is the Microbody targeting signal element.

Belongs to the catalase family. Homotetramer. It depends on heme as a cofactor.

The protein resides in the peroxisome matrix. The enzyme catalyses 2 H2O2 = O2 + 2 H2O. Functionally, catalyzes the degradation of hydrogen peroxide (H(2)O(2)) generated by peroxisomal oxidases to water and oxygen, thereby protecting cells from the toxic effects of hydrogen peroxide. This chain is Peroxisomal catalase (PXP9), found in Pichia angusta (Yeast).